Reading from the N-terminus, the 357-residue chain is MNPFNIISDTGVSAAVYAGLSRAKCTGQYKECRNGGSTFLRNVKFHITDPRNRNLTLNGRKSNIFQMVAETFWVMSGSGNIKEFLEFFLPRAPQYSDDGINWHGAYGPRMYAHNQLQSAIDLLIKDKDTRRAYVMIADPTLDSAPAIEAAYGVGHSPKDVPCNREIHINIIEDKLCMKVIQRSGDMLFGTGSINPFEFTFLQELLSEATGYALGDYQWDVTDAHYYKAFEDQVNDVLRSEQTFWPNDGKPLGTRFTSATKMQEFFAGVVRVWVKQINRLIDLGDAHYAINDLFADYGVLPEGRLRDYAKMVTFYIAAKQGEIEGDFKALLTNIPTNTDLGQAILTSPFRKFGVVLGD.

Belongs to the thymidylate synthase family.

The enzyme catalyses dUMP + (6R)-5,10-methylene-5,6,7,8-tetrahydrofolate + H2O = 5-hydroxymethyl-dUMP + (6S)-5,6,7,8-tetrahydrofolate. In terms of biological role, catalyzes formation of 5-hydroxymethyldeoxyuridylate (5HMdUMP) as a step in the pathway that replaces dTMP by thymidine hypermodifications in the viral genome. As a final result of the pathway of hypermodification, 5-Nalpha-putrescinylthymidine (Nalpha-PutT) substitutes for about 50% of thymidines in the viral DNA. These modifications probably prevent degradation of viral genome by the host restriction-modification antiviral defense system. The polypeptide is Deoxyuridylate hydroxymethyltransferase (Delftia acidovorans (Pseudomonas acidovorans)).